Reading from the N-terminus, the 930-residue chain is MPRAPHFMPLLLLLLLLSLPHTQAAFPQDPLPLLISDLQGTSPLSWFRGLEDDAVAAELGLDFQRFLTLNRTLLVAARDHVFSFDLQAEEEGEGLVPNKYLTWRSQDVENCAVRGKLTDECYNYIRVLVPWDSQTLLACGTNSFSPVCRSYGITSLQQEGEELSGQARCPFDATQSNVAIFAEGSLYSATAADFQASDAVVYRSLGPQPPLRSAKYDSKWLREPHFVQALEHGDHVYFFFREVSVEDARLGRVQFSRVARVCKRDMGGSPRALDRHWTSFLKLRLNCSVPGDSTFYFDVLQALTGPVNLHGRSALFGVFTTQTNSIPGSAVCAFYLDEIERGFEGKFKEQRSLDGAWTPVSEDRVPSPRPGSCAGVGGAALFSSSRDLPDDVLTFIKAHPLLDPAVPPVTHQPLLTLTSRALLTQVAVDGMAGPHSNITVMFLGSNDGTVLKVLTPGGRSGGPEPILLEEIDAYSPARCSGKRTAQTARRIIGLELDTEGHRLFVAFSGCIVYLPLSRCARHGACQRSCLASQDPYCGWHSSRGCVDIRGSGGTDVDQAGNQESMEHGDCQDGATGSQSGPGDSAYGVRRDLPPASASRSVPIPLLLASVAAAFALGASVSGLLVSCACRRAHRRRGKDIETPGLPRPLSLRSLARLHGGGPEPPPPSKDGDAVQTPQLYTTFLPPPEGVPPPELACLPTPESTPELPVKHLRAAGDPWEWNQNRNNAKEGPGRSRGGHAAGGPAPRVLVRPPPPGCPGQAVEVTTLEELLRYLHGPQPPRKGAEPPAPLTSRALPPEPAPALLGGPSPRPHECASPLRLDVPPEGRCASAPARPALSAPAPRLGVGGGRRLPFSGHRAPPALLTRVPSGGPSRYSGGPGKHLLYLGRPEGYRGRALKRVDVEKPQLSLKPPLVGPSSRQAVPNGGRFNF.

The signal sequence occupies residues 1-24 (MPRAPHFMPLLLLLLLLSLPHTQA). The Extracellular segment spans residues 25-604 (AFPQDPLPLL…ASASRSVPIP (580 aa)). In terms of domain architecture, Sema spans 30–516 (PLPLLISDLQ…FSGCIVYLPL (487 aa)). N-linked (GlcNAc...) asparagine glycosylation is present at N70. 4 cysteine pairs are disulfide-bonded: C111-C121, C139-C148, C262-C373, and C287-C332. N286 carries an N-linked (GlcNAc...) asparagine glycan. N-linked (GlcNAc...) asparagine glycosylation is present at N437. 4 disulfide bridges follow: C479–C510, C519–C537, C525–C570, and C529–C545. Residues 554 to 593 (TDVDQAGNQESMEHGDCQDGATGSQSGPGDSAYGVRRDLP) are disordered. Residues 605 to 625 (LLLASVAAAFALGASVSGLLV) traverse the membrane as a helical segment. At 626–930 (SCACRRAHRR…AVPNGGRFNF (305 aa)) the chain is on the cytoplasmic side. 4 disordered regions span residues 654 to 674 (LARLHGGGPEPPPPSKDGDAV), 716 to 761 (GDPW…PGQA), 775 to 882 (HGPQ…PGKH), and 908 to 930 (SLKPPLVGPSSRQAVPNGGRFNF). The segment covering 829-844 (ASAPARPALSAPAPRL) has biased composition (low complexity).

Belongs to the semaphorin family. In terms of tissue distribution, in adult tissues, expressed only in skeletal muscle.

The protein resides in the cell membrane. Functionally, shows growth cone collapsing activity on dorsal root ganglion (DRG) neurons in vitro. May be a stop signal for the DRG neurons in their target areas, and possibly also for other neurons. May also be involved in the maintenance and remodeling of neuronal connections. The protein is Semaphorin-6C (SEMA6C) of Homo sapiens (Human).